We begin with the raw amino-acid sequence, 285 residues long: Diphthine methyl ester synthase (285 aa).

Residues L9, D84, G87, 112-113 (SI), L163, V221, and H246 each bind S-adenosyl-L-methionine.

It belongs to the diphthine synthase family.

It is found in the cytoplasm. It catalyses the reaction 2-[(3S)-amino-3-carboxypropyl]-L-histidyl-[translation elongation factor 2] + 4 S-adenosyl-L-methionine = diphthine methyl ester-[translation elongation factor 2] + 4 S-adenosyl-L-homocysteine + 3 H(+). Its pathway is protein modification; peptidyl-diphthamide biosynthesis. Functionally, S-adenosyl-L-methionine-dependent methyltransferase that catalyzes four methylations of the modified target histidine residue in translation elongation factor 2 (EF-2), to form an intermediate called diphthine methyl ester. The four successive methylation reactions represent the second step of diphthamide biosynthesis. The chain is Diphthine methyl ester synthase (dph5) from Emericella nidulans (strain FGSC A4 / ATCC 38163 / CBS 112.46 / NRRL 194 / M139) (Aspergillus nidulans).